Reading from the N-terminus, the 308-residue chain is Cytochrome b (308 aa).

Transmembrane regions (helical) follow at residues 1–21, 45–66, 81–101, and 146–166; these read FGSL…LLAT, WLIR…YLHI, WNTG…GYVL, and FFAL…IHFT. Histidine 65 is a heme b binding site. Positions 150 and 164 each coordinate heme b. A ubiquinone is bound at residue histidine 169. A run of 3 helical transmembrane segments spans residues 194 to 214, 256 to 276, and 288 to 308; these read VKDI…ALFS, LGGV…PFLH, and LSQF…WVGS.

Belongs to the cytochrome b family. In terms of assembly, the cytochrome bc1 complex contains 11 subunits: 3 respiratory subunits (MT-CYB, CYC1 and UQCRFS1), 2 core proteins (UQCRC1 and UQCRC2) and 6 low-molecular weight proteins (UQCRH/QCR6, UQCRB/QCR7, UQCRQ/QCR8, UQCR10/QCR9, UQCR11/QCR10 and a cleavage product of UQCRFS1). This cytochrome bc1 complex then forms a dimer. Requires heme b as cofactor.

The protein localises to the mitochondrion inner membrane. In terms of biological role, component of the ubiquinol-cytochrome c reductase complex (complex III or cytochrome b-c1 complex) that is part of the mitochondrial respiratory chain. The b-c1 complex mediates electron transfer from ubiquinol to cytochrome c. Contributes to the generation of a proton gradient across the mitochondrial membrane that is then used for ATP synthesis. The polypeptide is Cytochrome b (MT-CYB) (Colaptes rupicola (Southern Andean flicker)).